Reading from the N-terminus, the 80-residue chain is UPF0154 protein MGAS10270_Spy0296 (80 aa).

A helical transmembrane segment spans residues 4–24; it reads AIWILLLIVALGVGVFGGIFI.

Belongs to the UPF0154 family.

The protein resides in the cell membrane. In Streptococcus pyogenes serotype M2 (strain MGAS10270), this protein is UPF0154 protein MGAS10270_Spy0296.